The following is a 514-amino-acid chain: 2-isopropylmalate synthase (514 aa).

The Pyruvate carboxyltransferase domain maps to 5–268 (LIIFDTTLRD…DVGIDTSQIV (264 aa)). 4 residues coordinate Mn(2+): D14, H202, H204, and N239. Residues 395 to 514 (KFVSLSQRSE…KDDKVNPQRS (120 aa)) form a regulatory domain region.

It belongs to the alpha-IPM synthase/homocitrate synthase family. LeuA type 1 subfamily. Homodimer. Requires Mn(2+) as cofactor.

Its subcellular location is the cytoplasm. It catalyses the reaction 3-methyl-2-oxobutanoate + acetyl-CoA + H2O = (2S)-2-isopropylmalate + CoA + H(+). The protein operates within amino-acid biosynthesis; L-leucine biosynthesis; L-leucine from 3-methyl-2-oxobutanoate: step 1/4. Its function is as follows. Catalyzes the condensation of the acetyl group of acetyl-CoA with 3-methyl-2-oxobutanoate (2-ketoisovalerate) to form 3-carboxy-3-hydroxy-4-methylpentanoate (2-isopropylmalate). The chain is 2-isopropylmalate synthase from Burkholderia cenocepacia (strain ATCC BAA-245 / DSM 16553 / LMG 16656 / NCTC 13227 / J2315 / CF5610) (Burkholderia cepacia (strain J2315)).